The sequence spans 594 residues: Ferredoxin--nitrite reductase, chloroplastic (594 aa).

A chloroplast-targeting transit peptide spans 1–32 (MASLPVNKIIPSSTTLLSSSNNNRRRNNSSIR). Over residues 13–22 (STTLLSSSNN) the composition is skewed to low complexity. The segment at 13–36 (STTLLSSSNNNRRRNNSSIRCQKA) is disordered. The [4Fe-4S] cluster site is built by Cys473, Cys479, Cys514, and Cys518. A siroheme-binding site is contributed by Cys518.

The protein belongs to the nitrite and sulfite reductase 4Fe-4S domain family. As to quaternary structure, monomer. The cofactor is siroheme. Requires [4Fe-4S] cluster as cofactor.

The protein resides in the plastid. It localises to the chloroplast. The enzyme catalyses 6 oxidized [2Fe-2S]-[ferredoxin] + NH4(+) + 2 H2O = nitrite + 6 reduced [2Fe-2S]-[ferredoxin] + 8 H(+). It functions in the pathway nitrogen metabolism; nitrate reduction (assimilation). This Spinacia oleracea (Spinach) protein is Ferredoxin--nitrite reductase, chloroplastic (NIR).